The following is a 1162-amino-acid chain: Protein OBERON 4 (1162 aa).

Basic and acidic residues-rich tracts occupy residues 1–19 (MKRL…KNVD), 61–77 (NRDL…HRSE), 90–99 (FRSERERPNR), and 118–134 (VDDR…DRSL). 4 disordered regions span residues 1–235 (MKRL…PSCS), 251–307 (IGKS…VSQN), 321–346 (DHRD…DKDE), and 441–485 (SKTE…QSGV). Over residues 135-146 (KSPSWSRDSPNE) the composition is skewed to polar residues. Residues 148–157 (SKFKPLDSRN) are compositionally biased toward basic and acidic residues. Residues 163 to 182 (KSLASPTWSKDSGSEQSKSV) show a composition bias toward polar residues. The span at 203–213 (EMEEGELEPEP) shows a compositional bias: acidic residues. 4 stretches are compositionally biased toward basic and acidic residues: residues 225-235 (TKHDCKLPSCS), 263-300 (SNRE…HATE), 336-346 (DTVDEKGDKDE), and 441-457 (SKTE…KDDN). A PHD-type zinc finger spans residues 835–899 (ACMCLVCSNF…QFHCVACNHP (65 aa)). Positions 1065-1161 (MKQAEAEMFQ…KMEMTKQSLA (97 aa)) form a coiled coil.

In terms of assembly, self-interacts. Interacts with OBE1 and OBE2. Interacts with OBE3.

The protein resides in the nucleus. Functionally, probable transcription factor that functions redundantly with OBE3 in specification of the hypophysis and establishment of the embryonic root. Involved in the activation of ARF5/MP-dependent gene expression during embryonic root meristem initiation. Involved in shoot meristem homeostasis. The protein is Protein OBERON 4 of Arabidopsis thaliana (Mouse-ear cress).